The chain runs to 581 residues: 2-succinyl-5-enolpyruvyl-6-hydroxy-3-cyclohexene-1-carboxylate synthase (581 aa).

The protein belongs to the TPP enzyme family. MenD subfamily. Homodimer. It depends on Mg(2+) as a cofactor. The cofactor is Mn(2+). Requires thiamine diphosphate as cofactor.

It catalyses the reaction isochorismate + 2-oxoglutarate + H(+) = 5-enolpyruvoyl-6-hydroxy-2-succinyl-cyclohex-3-ene-1-carboxylate + CO2. Its pathway is quinol/quinone metabolism; 1,4-dihydroxy-2-naphthoate biosynthesis; 1,4-dihydroxy-2-naphthoate from chorismate: step 2/7. It participates in cofactor biosynthesis; phylloquinone biosynthesis. Catalyzes the thiamine diphosphate-dependent decarboxylation of 2-oxoglutarate and the subsequent addition of the resulting succinic semialdehyde-thiamine pyrophosphate anion to isochorismate to yield 2-succinyl-5-enolpyruvyl-6-hydroxy-3-cyclohexene-1-carboxylate (SEPHCHC). In Gloeothece citriformis (strain PCC 7424) (Cyanothece sp. (strain PCC 7424)), this protein is 2-succinyl-5-enolpyruvyl-6-hydroxy-3-cyclohexene-1-carboxylate synthase.